The primary structure comprises 642 residues: 1-deoxy-D-xylulose-5-phosphate synthase 2 (642 aa).

Thiamine diphosphate-binding positions include histidine 73 and 113-115; that span reads SHA. Residue aspartate 144 participates in Mg(2+) binding. Thiamine diphosphate-binding positions include 145–146, asparagine 174, tyrosine 285, and glutamate 366; that span reads GA. Asparagine 174 is a Mg(2+) binding site.

Belongs to the transketolase family. DXPS subfamily. In terms of assembly, homodimer. The cofactor is Mg(2+). Thiamine diphosphate is required as a cofactor.

The enzyme catalyses D-glyceraldehyde 3-phosphate + pyruvate + H(+) = 1-deoxy-D-xylulose 5-phosphate + CO2. It functions in the pathway metabolic intermediate biosynthesis; 1-deoxy-D-xylulose 5-phosphate biosynthesis; 1-deoxy-D-xylulose 5-phosphate from D-glyceraldehyde 3-phosphate and pyruvate: step 1/1. Functionally, catalyzes the acyloin condensation reaction between C atoms 2 and 3 of pyruvate and glyceraldehyde 3-phosphate to yield 1-deoxy-D-xylulose-5-phosphate (DXP). The protein is 1-deoxy-D-xylulose-5-phosphate synthase 2 of Streptomyces avermitilis (strain ATCC 31267 / DSM 46492 / JCM 5070 / NBRC 14893 / NCIMB 12804 / NRRL 8165 / MA-4680).